Here is a 308-residue protein sequence, read N- to C-terminus: Cytochrome b (308 aa).

A run of 4 helical transmembrane segments spans residues 1–21 (FGSL…LLAM), 45–66 (WLIR…YLHI), 81–101 (WNIG…GYVL), and 146–166 (FFAF…VHLT). The heme b site is built by His-51 and His-65. 2 residues coordinate heme b: His-150 and His-164. His-169 is a binding site for a ubiquinone. 3 consecutive transmembrane segments (helical) span residues 194-214 (IKDL…ALFS), 256-276 (LGGV…PLLH), and 288-308 (LSQI…WVGS).

This sequence belongs to the cytochrome b family. The cytochrome bc1 complex contains 11 subunits: 3 respiratory subunits (MT-CYB, CYC1 and UQCRFS1), 2 core proteins (UQCRC1 and UQCRC2) and 6 low-molecular weight proteins (UQCRH/QCR6, UQCRB/QCR7, UQCRQ/QCR8, UQCR10/QCR9, UQCR11/QCR10 and a cleavage product of UQCRFS1). This cytochrome bc1 complex then forms a dimer. It depends on heme b as a cofactor.

The protein localises to the mitochondrion inner membrane. Its function is as follows. Component of the ubiquinol-cytochrome c reductase complex (complex III or cytochrome b-c1 complex) that is part of the mitochondrial respiratory chain. The b-c1 complex mediates electron transfer from ubiquinol to cytochrome c. Contributes to the generation of a proton gradient across the mitochondrial membrane that is then used for ATP synthesis. The chain is Cytochrome b (MT-CYB) from Corvus corax (Common raven).